Here is a 526-residue protein sequence, read N- to C-terminus: Major facilitator superfamily domain-containing protein 4A (526 aa).

12 consecutive transmembrane segments (helical) span residues 21 to 41 (LTYW…GPTI), 55 to 75 (ITLV…IGGF), 84 to 104 (LSSL…IPLC), 107 to 127 (LLML…IDTI), 142 to 162 (VFLQ…PLIA), 215 to 235 (YAFW…FVLV), 297 to 317 (LSFF…DGIV), 341 to 361 (GYLT…AIPL), 377 to 397 (GVIV…FLFI), 401 to 421 (CLGL…EDIL), 430 to 450 (VLVT…GSVM), and 458 to 478 (FLLC…FLYF).

The protein belongs to the major facilitator superfamily.

The protein resides in the membrane. This chain is Major facilitator superfamily domain-containing protein 4A (mfsd4a), found in Danio rerio (Zebrafish).